We begin with the raw amino-acid sequence, 311 residues long: 3'(2'),5'-bisphosphate nucleotidase 1 (311 aa).

The active-site Proton acceptor is the Asp49. Mg(2+) is bound by residues Glu72, Asp116, Leu118, and Asp119. Thr121 functions as the Proton acceptor in the catalytic mechanism. Positions 202, 205, 227, and 231 each coordinate AMP. Position 254 (Asp254) interacts with Mg(2+).

It belongs to the inositol monophosphatase superfamily. It depends on Mg(2+) as a cofactor.

The catalysed reaction is adenosine 3',5'-bisphosphate + H2O = AMP + phosphate. The enzyme catalyses adenosine 2',5'-bisphosphate + H2O = AMP + phosphate. It catalyses the reaction 3'-phosphoadenylyl sulfate + H2O = adenosine 5'-phosphosulfate + phosphate. It carries out the reaction 1D-myo-inositol 1,4-bisphosphate + H2O = 1D-myo-inositol 4-phosphate + phosphate. The catalysed reaction is 1D-myo-inositol 1,3,4-trisphosphate + H2O = 1D-myo-inositol 3,4-bisphosphate + phosphate. Its activity is regulated as follows. Inhibited by Li(+) and Ca(2+), but not by Na(+). Phosphatase that converts 3'(2')-phosphoadenosine 5'-phosphate (PAP) to AMP and adenosine 3'-phosphate 5'-phosphosulfate (PAPS) to adenosine 5'-phosphosulfate (APS). Is also able to hydrolyze inositol 1,4-bisphosphate (Ins(1,4)P2) and inositol 1,3,4-trisphosphate (Ins(1,3,4)P3), but is not active on AMP, 3'-AMP, fructose-1,6-bisphosphate, Ins(1)P, Ins(2)P and Ins(1,4,5)P3. Probably prevents the toxic accumulation of PAP, a compound which inhibits a variety of proteins, including PAPS-utilizing enzymes such as sulfotransferases, and RNA processing enzymes. Could also play a role in inositol recycling and phosphoinositide metabolism. The polypeptide is 3'(2'),5'-bisphosphate nucleotidase 1 (bpnt1) (Dictyostelium discoideum (Social amoeba)).